A 319-amino-acid chain; its full sequence is Acetyl-coenzyme A carboxylase carboxyl transferase subunit alpha (319 aa).

In terms of domain architecture, CoA carboxyltransferase C-terminal spans 39–293; sequence RLQKKSNDLT…KAVLEKQLHE (255 aa).

The protein belongs to the AccA family. Acetyl-CoA carboxylase is a heterohexamer composed of biotin carboxyl carrier protein (AccB), biotin carboxylase (AccC) and two subunits each of ACCase subunit alpha (AccA) and ACCase subunit beta (AccD).

It is found in the cytoplasm. The enzyme catalyses N(6)-carboxybiotinyl-L-lysyl-[protein] + acetyl-CoA = N(6)-biotinyl-L-lysyl-[protein] + malonyl-CoA. The protein operates within lipid metabolism; malonyl-CoA biosynthesis; malonyl-CoA from acetyl-CoA: step 1/1. In terms of biological role, component of the acetyl coenzyme A carboxylase (ACC) complex. First, biotin carboxylase catalyzes the carboxylation of biotin on its carrier protein (BCCP) and then the CO(2) group is transferred by the carboxyltransferase to acetyl-CoA to form malonyl-CoA. The protein is Acetyl-coenzyme A carboxylase carboxyl transferase subunit alpha of Neisseria meningitidis serogroup C (strain 053442).